The primary structure comprises 545 residues: Chaperonin GroEL 5 (545 aa).

Residues 30–33 (TLGP), Lys51, 87–91 (DGTTT), Gly415, and Asp495 each bind ATP.

The protein belongs to the chaperonin (HSP60) family. In terms of assembly, forms a cylinder of 14 subunits composed of two heptameric rings stacked back-to-back. Interacts with the co-chaperonin GroES.

It localises to the cytoplasm. It carries out the reaction ATP + H2O + a folded polypeptide = ADP + phosphate + an unfolded polypeptide.. Functionally, together with its co-chaperonin GroES, plays an essential role in assisting protein folding. The GroEL-GroES system forms a nano-cage that allows encapsulation of the non-native substrate proteins and provides a physical environment optimized to promote and accelerate protein folding. This chain is Chaperonin GroEL 5, found in Sinorhizobium medicae (strain WSM419) (Ensifer medicae).